The primary structure comprises 287 residues: Phosphatidylserine decarboxylase proenzyme (287 aa).

Active-site charge relay system; for autoendoproteolytic cleavage activity residues include Asp90, His147, and Ser252. Ser252 serves as the catalytic Schiff-base intermediate with substrate; via pyruvic acid; for decarboxylase activity. Ser252 is subject to Pyruvic acid (Ser); by autocatalysis.

The protein belongs to the phosphatidylserine decarboxylase family. PSD-B subfamily. Prokaryotic type I sub-subfamily. As to quaternary structure, heterodimer of a large membrane-associated beta subunit and a small pyruvoyl-containing alpha subunit. Pyruvate is required as a cofactor. In terms of processing, is synthesized initially as an inactive proenzyme. Formation of the active enzyme involves a self-maturation process in which the active site pyruvoyl group is generated from an internal serine residue via an autocatalytic post-translational modification. Two non-identical subunits are generated from the proenzyme in this reaction, and the pyruvate is formed at the N-terminus of the alpha chain, which is derived from the carboxyl end of the proenzyme. The autoendoproteolytic cleavage occurs by a canonical serine protease mechanism, in which the side chain hydroxyl group of the serine supplies its oxygen atom to form the C-terminus of the beta chain, while the remainder of the serine residue undergoes an oxidative deamination to produce ammonia and the pyruvoyl prosthetic group on the alpha chain. During this reaction, the Ser that is part of the protease active site of the proenzyme becomes the pyruvoyl prosthetic group, which constitutes an essential element of the active site of the mature decarboxylase.

It is found in the cell membrane. The catalysed reaction is a 1,2-diacyl-sn-glycero-3-phospho-L-serine + H(+) = a 1,2-diacyl-sn-glycero-3-phosphoethanolamine + CO2. It functions in the pathway phospholipid metabolism; phosphatidylethanolamine biosynthesis; phosphatidylethanolamine from CDP-diacylglycerol: step 2/2. In terms of biological role, catalyzes the formation of phosphatidylethanolamine (PtdEtn) from phosphatidylserine (PtdSer). The protein is Phosphatidylserine decarboxylase proenzyme of Pseudomonas putida (strain GB-1).